A 410-amino-acid polypeptide reads, in one-letter code: Beta-arrestin-2 (410 aa).

Tyr-48 carries the phosphotyrosine modification. Pro-176 and Pro-181 each carry hydroxyproline; by PHD2. The interaction with TRAF6 stretch occupies residues 241-410 (ADICLFSTAQ…KDDDCDDQFC (170 aa)). At Ser-361 the chain carries Phosphoserine. An interaction with AP2B1 region spans residues 364–410 (RETDVPVDTNLIEFDTNYATDDDIVFEDFARLRLKGMKDDDCDDQFC). Thr-383 is subject to Phosphothreonine. The [DE]-X(1,2)-F-X-X-[FL]-X-X-X-R motif signature appears at 386-396 (DIVFEDFARLR).

It belongs to the arrestin family. Homooligomer; the self-association is mediated by InsP6-binding. Heterooligomer with ARRB1; the association is mediated by InsP6-binding. Interacts with ADRB2 and CHRM2. Interacts with PDE4A. Interacts with PDE4D. Interacts with MAPK10, MAPK1 and MAPK3. Interacts with DRD2. Interacts with FSHR. Interacts with CLTC. Interacts with HTR2C. Interacts with CCR5. Interacts with CXCR4. Interacts with SRC. Interacts with DUSP16; the interaction is interrupted by stimulation of AGTR1 and activation of MAPK10. Interacts with CHUK; the interaction is enhanced stimulation of ADRB2. Interacts with RELA. Interacts with MDM2; the interaction is enhanced by activation of GPCRs. Interacts with SLC9A5. Interacts with TRAF6. Interacts with IGF1R. Interacts with ENG. Interacts with ARRB2. Interacts with KIR2DL1, KIR2DL3 and KIR2DL4. Interacts with LDLR. Interacts with AP2B1. Interacts with C5AR1. Interacts with RAF1. Interacts with MAP2K1. Interacts with MAPK1. Interacts with MAPK10; the interaction enhances MAPK10 activation by MAP3K5. Interacts with MAP2K4; the interaction is enhanced by presence of MAP3K5 and MAPK10. Interacts with MAP3K5. Interacts with AKT1. Interacts with IKBKB and MAP3K14. Interacts with SMO (activated). Interacts with GSK3A and GSK3B. Interacts with CXCR4; the interaction is dependent on C-terminal phosphorylation of CXCR4 and allows activation of MAPK1 and MAPK3. Interacts with GPR143. Interacts with HCK and CXCR1 (phosphorylated). Associates with protein phosphatase 2A (PP2A). Interacts with ACKR3 and ACKR4. Interacts with ARRDC1; the interaction is direct. Interacts with GPR61, GPR62 and GPR135. Interacts (via NACHT and LRR domains) with NLRP3; this interaction is direct and inducible by omega-3 polyunsaturated fatty acids (PUFAs). Interacts with FFAR4 (via C-terminus); this interaction is stimulated by long-chain fatty acids (LCFAs). Interacts with GPR35. Interacts with GPR84. Interacts with TIGIT; this interaction inhibits the NF-kappa-B pathway. Interacts with TGFBR3. Post-translationally, phosphorylated at Thr-383 in the cytoplasm; probably dephosphorylated at the plasma membrane. The phosphorylation does not regulate internalization and recycling of ADRB2, interaction with clathrin or AP2B1. In terms of processing, the ubiquitination status appears to regulate the formation and trafficking of beta-arrestin-GPCR complexes and signaling. Ubiquitination appears to occur GPCR-specific. Ubiquitinated by MDM2; the ubiquitination is required for rapid internalization of ADRB2. Deubiquitinated by USP33; the deubiquitination leads to a dissociation of the beta-arrestin-GPCR complex. Stimulation of a class A GPCR, such as ADRB2, induces transient ubiquitination and subsequently promotes association with USP33. Stimulation of a class B GPCR promotes a sustained ubiquitination. Deubiquitinated by USP20; allowing USP20 to deubiquitinate TRAF6 leading to inhibition of NF-kappa-B signaling. Hydroxylation by PHD2 modulates the rate of internalization by slowing down recruitment to the plasma membrane and inhibiting subsequent co-internalization with class A receptors. As to expression, predominantly localized in neuronal tissues and in the spleen.

The protein resides in the cytoplasm. It is found in the nucleus. It localises to the cell membrane. The protein localises to the membrane. Its subcellular location is the clathrin-coated pit. The protein resides in the cytoplasmic vesicle. Functions in regulating agonist-mediated G-protein coupled receptor (GPCR) signaling by mediating both receptor desensitization and resensitization processes. During homologous desensitization, beta-arrestins bind to the GPRK-phosphorylated receptor and sterically preclude its coupling to the cognate G-protein; the binding appears to require additional receptor determinants exposed only in the active receptor conformation. The beta-arrestins target many receptors for internalization by acting as endocytic adapters (CLASPs, clathrin-associated sorting proteins) and recruiting the GPRCs to the adapter protein 2 complex 2 (AP-2) in clathrin-coated pits (CCPs). However, the extent of beta-arrestin involvement appears to vary significantly depending on the receptor, agonist and cell type. Internalized arrestin-receptor complexes traffic to intracellular endosomes, where they remain uncoupled from G-proteins. Two different modes of arrestin-mediated internalization occur. Class A receptors, like ADRB2, OPRM1, ENDRA, D1AR and ADRA1B dissociate from beta-arrestin at or near the plasma membrane and undergo rapid recycling. Class B receptors, like AVPR2, AGTR1, NTSR1, TRHR and TACR1 internalize as a complex with arrestin and traffic with it to endosomal vesicles, presumably as desensitized receptors, for extended periods of time. Receptor resensitization then requires that receptor-bound arrestin is removed so that the receptor can be dephosphorylated and returned to the plasma membrane. Mediates endocytosis of CCR7 following ligation of CCL19 but not CCL21. Involved in internalization of P2RY1, P2RY4, P2RY6 and P2RY11 and ATP-stimulated internalization of P2RY2. Involved in phosphorylation-dependent internalization of OPRD1 and subsequent recycling or degradation. Involved in ubiquitination of IGF1R. Beta-arrestins function as multivalent adapter proteins that can switch the GPCR from a G-protein signaling mode that transmits short-lived signals from the plasma membrane via small molecule second messengers and ion channels to a beta-arrestin signaling mode that transmits a distinct set of signals that are initiated as the receptor internalizes and transits the intracellular compartment. Acts as a signaling scaffold for MAPK pathways such as MAPK1/3 (ERK1/2) and MAPK10 (JNK3). ERK1/2 and JNK3 activated by the beta-arrestin scaffold are largely excluded from the nucleus and confined to cytoplasmic locations such as endocytic vesicles, also called beta-arrestin signalosomes. Acts as a signaling scaffold for the AKT1 pathway. GPCRs for which the beta-arrestin-mediated signaling relies on both ARRB1 and ARRB2 (codependent regulation) include ADRB2, F2RL1 and PTH1R. For some GPCRs the beta-arrestin-mediated signaling relies on either ARRB1 or ARRB2 and is inhibited by the other respective beta-arrestin form (reciprocal regulation). Increases ERK1/2 signaling in AGTR1- and AVPR2-mediated activation (reciprocal regulation). Involved in CCR7-mediated ERK1/2 signaling involving ligand CCL19. Is involved in type-1A angiotensin II receptor/AGTR1-mediated ERK activity. Is involved in type-1A angiotensin II receptor/AGTR1-mediated MAPK10 activity. Is involved in dopamine-stimulated AKT1 activity in the striatum by disrupting the association of AKT1 with its negative regulator PP2A. Involved in AGTR1-mediated chemotaxis. Appears to function as signaling scaffold involved in regulation of MIP-1-beta-stimulated CCR5-dependent chemotaxis. Involved in attenuation of NF-kappa-B-dependent transcription in response to GPCR or cytokine stimulation by interacting with and stabilizing CHUK. Suppresses UV-induced NF-kappa-B-dependent activation by interacting with CHUK. The function is promoted by stimulation of ADRB2 and dephosphorylation of ARRB2. Involved in IL8-mediated granule release in neutrophils. Involved in p53/TP53-mediated apoptosis by regulating MDM2 and reducing the MDM2-mediated degradation of p53/TP53. May serve as nuclear messenger for GPCRs. Upon stimulation of OR1D2, may be involved in regulation of gene expression during the early processes of fertilization. Also involved in regulation of receptors other than GPCRs. Involved in endocytosis of TGFBR2 and TGFBR3 and down-regulates TGF-beta signaling such as NF-kappa-B activation. Involved in endocytosis of low-density lipoprotein receptor/LDLR. Involved in endocytosis of smoothened homolog/Smo, which also requires GRK2. Involved in endocytosis of SLC9A5. Involved in endocytosis of ENG and subsequent TGF-beta-mediated ERK activation and migration of epithelial cells. Involved in Toll-like receptor and IL-1 receptor signaling through the interaction with TRAF6 which prevents TRAF6 autoubiquitination and oligomerization required for activation of NF-kappa-B and JUN. Involved in insulin resistance by acting as insulin-induced signaling scaffold for SRC, AKT1 and INSR. Involved in regulation of inhibitory signaling of natural killer cells by recruiting PTPN6 and PTPN11 to KIR2DL1. Involved in the internalization of the atypical chemokine receptor ACKR3. Acts as an adapter protein coupling FFAR4 receptor to specific downstream signaling pathways, as well as mediating receptor endocytosis. During the activation step of NLRP3 inflammasome, directly associates with NLRP3 leading to inhibition of pro-inflammatory cytokine release and inhibition of inflammation. The polypeptide is Beta-arrestin-2 (Arrb2) (Mus musculus (Mouse)).